The primary structure comprises 175 residues: NADH-quinone oxidoreductase subunit I (175 aa).

4Fe-4S ferredoxin-type domains follow at residues 69–98 (KRDEQGRERCTSCFCCMWICPADAIYIEAG) and 115–144 (KKFEIDLLRCIFCGMCEEACPKGAIYLDGP). Positions 78, 81, 84, 88, 124, 127, 130, and 134 each coordinate [4Fe-4S] cluster.

This sequence belongs to the complex I 23 kDa subunit family. In terms of assembly, NDH-1 is composed of 14 different subunits. Subunits NuoA, H, J, K, L, M, N constitute the membrane sector of the complex. [4Fe-4S] cluster serves as cofactor.

The protein localises to the cell inner membrane. It carries out the reaction a quinone + NADH + 5 H(+)(in) = a quinol + NAD(+) + 4 H(+)(out). Functionally, NDH-1 shuttles electrons from NADH, via FMN and iron-sulfur (Fe-S) centers, to quinones in the respiratory chain. The immediate electron acceptor for the enzyme in this species is believed to be ubiquinone. Couples the redox reaction to proton translocation (for every two electrons transferred, four hydrogen ions are translocated across the cytoplasmic membrane), and thus conserves the redox energy in a proton gradient. The sequence is that of NADH-quinone oxidoreductase subunit I from Leptospira borgpetersenii serovar Hardjo-bovis (strain JB197).